The sequence spans 602 residues: Pentatricopeptide repeat-containing protein At3g04760, chloroplastic (602 aa).

A chloroplast-targeting transit peptide spans 1–78 (MTPLSSELVG…TDATLPTERR (78 aa)). The segment covering 42 to 64 (FSNSNPNNDNGRSFSSSGARNLQ) has biased composition (polar residues). The disordered stretch occupies residues 42 to 85 (FSNSNPNNDNGRSFSSSGARNLQTTTTTDATLPTERRQQHSQSL). Positions 65–74 (TTTTTDATLP) are enriched in low complexity. 14 PPR repeats span residues 88–122 (RDTQ…GYNP), 123–153 (DVIL…LEKF), 157–191 (DVFA…DFSP), 192–226 (DTVT…NCQP), 227–261 (TVIT…GLKP), 262–296 (DMFT…GCEP), 297–331 (DVIS…KCDP), 332–366 (NVVT…GLTP), 367–401 (DAYS…GCLP), 402–436 (DIVN…GCSP), 437–471 (NSSS…GIDP), 472–506 (DEIT…EFHP), 507–541 (SVVT…GCRP), and 542–576 (NETT…DAIS).

The protein belongs to the PPR family. P subfamily.

It localises to the plastid. The protein resides in the chloroplast. This Arabidopsis thaliana (Mouse-ear cress) protein is Pentatricopeptide repeat-containing protein At3g04760, chloroplastic.